Consider the following 585-residue polypeptide: Pentatricopeptide repeat-containing protein At4g21170 (585 aa).

PPR repeat units lie at residues 152 to 186 (LSVS…RLSP), 187 to 221 (SQSA…GIVS), 222 to 247 (DELT…KLME), 252 to 286 (SCKI…KLEL), 287 to 321 (SFCS…KFVT), 324 to 358 (DSAV…ETVR), 360 to 394 (WDST…GITV), 396 to 431 (DESC…GFVP), 432 to 466 (CTHK…EVYF), 467 to 501 (DSFA…KGSL), 502 to 534 (DVNA…MKEI), and 538 to 572 (NSKS…GLKP).

It belongs to the PPR family. P subfamily.

This Arabidopsis thaliana (Mouse-ear cress) protein is Pentatricopeptide repeat-containing protein At4g21170.